The primary structure comprises 673 residues: Zinc finger protein 16 (673 aa).

The segment covering 1–10 (MPSLRTRREE) has biased composition (basic and acidic residues). A disordered region spans residues 1–42 (MPSLRTRREEAEMELSAPGPSPWTPAPQARVSDAPAVTHPGS). Positions 62–210 (YQQPDCDTRT…GVPTAESPLI (149 aa)) are necessary for transcription activation. The C2H2-type 1; degenerate zinc finger occupies 209–231 (LICNECGKTFRGNPDLIQRQIVH). The C2H2-type 2; degenerate zinc finger occupies 237–259 (FMCDDCGKTFSQNSVLKNRHXSH). K253 participates in a covalent cross-link: Glycyl lysine isopeptide (Lys-Gly) (interchain with G-Cter in SUMO2). 7 C2H2-type zinc fingers span residues 284 to 306 (YTCTECGKAFSQNSSLKKHQKSH), 312 to 334 (YECNECGKAFRRSSNLIQHQRIH), 340 to 362 (YVCSECGKAFRRSSNLIKHHRTH), 368 to 390 (FECGECGKAFSQSAHLRKHQRVH), 396 to 418 (YECNDCGKPFSRVSNLIKHHRVH), 424 to 446 (YKCSDCGKAFSQSSSLIQHRRIH), and 452 to 474 (HVCNVCGKAFSYSSVLRKHQIIH). The tract at residues 332–364 (RIHSGEKPYVCSECGKAFRRSSNLIKHHRTHTG) is required for nuclear localization. Positions 464–494 (SSVLRKHQIIHTGEKPYRCSVCGKAFSHSSA) are required for nuclear localization. K478 carries the N6-acetyllysine modification. C2H2-type zinc fingers lie at residues 480-502 (YRCSVCGKAFSHSSALIQHQGVH), 508-530 (YACHECGKTFGRSSNLILHQRVH), 536-558 (YECTECGKTFSQSSTLIQHQRIH), 564-586 (HECNQCGKAFNRSSNLIHHQKVH), 592-614 (YTCVECGKGFSQSSHLIQHQIIH), 620-642 (YKCSECGKAFSQRSVLIQHQRIH), and 648-670 (YDCAACGKAFSQRSKLIKHQLIH).

It belongs to the krueppel C2H2-type zinc-finger protein family. Interacts with INCA1; the interaction inhibits INCA1 activity and induces the cell cycle process.

The protein localises to the nucleus. Functionally, acts as a transcriptional activator. Promotes cell proliferation by facilitating the cell cycle phase transition from the S to G2/M phase. Involved in both the hemin- and phorbol myristate acetate (PMA)-induced erythroid and megakaryocytic differentiation, respectively. Also plays a role as an inhibitor of cell apoptosis. The sequence is that of Zinc finger protein 16 (ZNF16) from Pan paniscus (Pygmy chimpanzee).